The primary structure comprises 472 residues: MEEINKTPKQIVAALDNYVIGQNQAKKAVAIALRNRYRRMELSAEMQEEITPKNMLMIGPTGVGKTEIARRLAKIVHAPFVKVEATKFTEVGYVGRDVESMVRDLVDVAIEMEKQQAYSGVRAQAVQAADKRLVKLLVPAQKKQAKNNGNEFQNMMNMFSQMQNGQTPNVDDSSNEEVTDEVRNQRLSVADQLKTGRLENSEVTIEMDDPQQAAAGNNNMLGQMGIDLGDSLGALMPKKRIQRTMPVSEAREILVREESEKLVNNADIYHDAIVRAENTGIIFIDEIDKITKGGQQGSGEVSREGVQRDILPIVEGSQISTKYGPINTDHILFIASGAFAESKPSDLIAELQGRFPIRVELDDLSKDDFVKILTEPKNALIKQYIALIGTDNIKVTFTIEAIEAIATIAYKVNHETQNIGARRLHTILEKLLEELLYEGPDMEMGEVTITESYVNERIGNIAQDKDLSRYIL.

Residues Ile20, 62 to 67 (GVGKTE), Asp285, Glu350, and Arg422 contribute to the ATP site.

This sequence belongs to the ClpX chaperone family. HslU subfamily. A double ring-shaped homohexamer of HslV is capped on each side by a ring-shaped HslU homohexamer. The assembly of the HslU/HslV complex is dependent on binding of ATP.

It localises to the cytoplasm. In terms of biological role, ATPase subunit of a proteasome-like degradation complex; this subunit has chaperone activity. The binding of ATP and its subsequent hydrolysis by HslU are essential for unfolding of protein substrates subsequently hydrolyzed by HslV. HslU recognizes the N-terminal part of its protein substrates and unfolds these before they are guided to HslV for hydrolysis. The sequence is that of ATP-dependent protease ATPase subunit HslU from Lactiplantibacillus plantarum (strain ATCC BAA-793 / NCIMB 8826 / WCFS1) (Lactobacillus plantarum).